Reading from the N-terminus, the 485-residue chain is Glutamate--tRNA ligase (485 aa).

The 'HIGH' region motif lies at 11 to 21; that stretch reads PSPTGLLHIGN. Positions 255-259 match the 'KMSKS' region motif; the sequence is KLSKR. K258 is a binding site for ATP.

This sequence belongs to the class-I aminoacyl-tRNA synthetase family. Glutamate--tRNA ligase type 1 subfamily. In terms of assembly, monomer.

It localises to the cytoplasm. It catalyses the reaction tRNA(Glu) + L-glutamate + ATP = L-glutamyl-tRNA(Glu) + AMP + diphosphate. Its function is as follows. Catalyzes the attachment of glutamate to tRNA(Glu) in a two-step reaction: glutamate is first activated by ATP to form Glu-AMP and then transferred to the acceptor end of tRNA(Glu). This Streptococcus gordonii (strain Challis / ATCC 35105 / BCRC 15272 / CH1 / DL1 / V288) protein is Glutamate--tRNA ligase.